The chain runs to 249 residues: MADS-box transcription factor 17 (249 aa).

An MADS-box domain is found at 1–61 (MGRGRVELKR…GKLYEFGSAG (61 aa)). The K-box domain maps to 88–178 (HQSWYQEMSR…KNKLEAEADS (91 aa)). The tract at residues 228 to 249 (ANPRSNGGGGDQNNNFVMGWPL) is disordered.

May interact with the K-box of MADS6. As to expression, expressed in the floral meristem, lodicule, palea, lemma, receptacle, empty glume, stamen, pistil, and ovule.

The protein resides in the nucleus. Probable transcription factor. Plays minor but redundant roles with MADS6 in floral development. This Oryza sativa subsp. japonica (Rice) protein is MADS-box transcription factor 17 (MADS17).